A 582-amino-acid polypeptide reads, in one-letter code: mRNA-decapping enzyme 1A (582 aa).

Phosphoserine is present on S62. Residues 132-141 (RSQQAARDKQ) show a composition bias toward basic and acidic residues. Disordered stretches follow at residues 132–154 (RSQQ…DHRP) and 172–214 (QMGD…PSGH). 6 positions are modified to phosphoserine: S142, S179, S180, S315, S319, and S334. Residues 173–196 (MGDSNISSPGLQPSTQLSNLGSTE) are compositionally biased toward polar residues. At T348 the chain carries Phosphothreonine. Position 353 is a phosphoserine (S353). The residue at position 376 (R376) is an Asymmetric dimethylarginine. The residue at position 401 (T401) is a Phosphothreonine. Residues S422, S522, S523, and S525 each carry the phosphoserine modification. The segment at 513–536 (RSSDLERKASSPSPLTIGTPESQR) is disordered. Residues 522-533 (SSPSPLTIGTPE) are compositionally biased toward polar residues. A phosphothreonine mark is found at T528 and T531.

It belongs to the DCP1 family. In terms of assembly, (Microbial infection) Interacts with rotavirus A non-structural protein 2; this interaction probably plays a role in the sequestration of DCP1A in viral factories. Interacts with rotavirus A non-structural protein 5; this interaction probably plays a role in its sequestration in viral factories. Forms a complex with EDC3, DCP2, DDX6 and EDC4/HEDLS, within this complex directly interacts with EDC3. Part of a cytoplasmic complex containing proteins involved in mRNA decay, including XRN1 and LSM1. Interacts with DCP1B. Interacts with DCP2. Interacts with DDX17 in an RNA-independent manner. Interacts with PNRC2. Interacts with SMAD4. Interacts with UPF1. Interacts with ZC3HAV1. Interacts with ZFP36L1. Interacts with NBDY. Interacts with DHX34; the interaction is RNA-independent. In terms of tissue distribution, detected in heart, brain, placenta, lung, skeletal muscle, liver, kidney and pancreas.

It is found in the cytoplasm. The protein localises to the P-body. The protein resides in the nucleus. It catalyses the reaction a 5'-end (N(7)-methyl 5'-triphosphoguanosine)-ribonucleoside in mRNA + H2O = N(7)-methyl-GDP + a 5'-end phospho-ribonucleoside in mRNA + 2 H(+). Necessary for the degradation of mRNAs, both in normal mRNA turnover and in nonsense-mediated mRNA decay. Removes the 7-methyl guanine cap structure from mRNA molecules, yielding a 5'-phosphorylated mRNA fragment and 7m-GDP. Contributes to the transactivation of target genes after stimulation by TGFB1. Essential for embryonic development. This chain is mRNA-decapping enzyme 1A (DCP1A), found in Homo sapiens (Human).